The chain runs to 339 residues: Sperm acrosome membrane-associated protein 6 (339 aa).

Positions 1 to 41 are cleaved as a signal peptide; that stretch reads MTSQRSLSSPQTRRPSVMGLISLVGSIVLLFLLIFRASTWA. Residues 42 to 45 carry the CXXC motif motif; sequence CLFC. Cystine bridges form between Cys-42-Cys-155, Cys-45-Cys-158, Cys-56-Cys-70, Cys-140-Cys-163, Cys-144-Cys-169, and Cys-186-Cys-241. Residues 42–310 are Extracellular-facing; sequence CLFCFTTYEE…NPQALTLGNL (269 aa). Residues 155–158 carry the CXXC motif motif; it reads CSGC. Residues 166 to 251 form the Ig-like domain; it reads PLDCPVQDML…VILHDQRPLA (86 aa). An N-linked (GlcNAc...) asparagine glycan is attached at Asn-258. The helical transmembrane segment at 311–331 threads the bilayer; sequence FLLAATAALGSASVTLLVWLF. The Cytoplasmic segment spans residues 332–339; sequence FRWYLSGN.

It belongs to the SPACA6 family. Forms a complex with IZUMO1 and TMEM81 on spermatocyte cell membrane required for fertilization. Highly expressed in testis. Minor expression also detected in epididymis, seminal vesicle and ovary. Predominantly expressed in testicular germ cells during spermiogenesis. Most abundant in round spermatids and detected at lower levels in elongating spermatids.

It localises to the cytoplasmic vesicle. Its subcellular location is the secretory vesicle. It is found in the acrosome membrane. Sperm protein required for fusion of sperm with the egg membrane during fertilization. May regulate the expression of sperm surface protein DCST2. This is Sperm acrosome membrane-associated protein 6 from Mus musculus (Mouse).